Consider the following 388-residue polypeptide: Glucose-1-phosphate adenylyltransferase (388 aa).

Residues tyrosine 100, glycine 165, 180-181, and serine 191 contribute to the alpha-D-glucose 1-phosphate site; that span reads EK.

The protein belongs to the bacterial/plant glucose-1-phosphate adenylyltransferase family. In terms of assembly, homotetramer.

The catalysed reaction is alpha-D-glucose 1-phosphate + ATP + H(+) = ADP-alpha-D-glucose + diphosphate. It functions in the pathway glycan biosynthesis; glycogen biosynthesis. In terms of biological role, involved in the biosynthesis of ADP-glucose, a building block required for the elongation reactions to produce glycogen. Catalyzes the reaction between ATP and alpha-D-glucose 1-phosphate (G1P) to produce pyrophosphate and ADP-Glc. This Clostridium perfringens (strain SM101 / Type A) protein is Glucose-1-phosphate adenylyltransferase.